Here is a 991-residue protein sequence, read N- to C-terminus: Valine--tRNA ligase (991 aa).

Residues 43-53 (PNVTGTLHMGH) carry the 'HIGH' region motif. Residues 582 to 586 (KMSKS) carry the 'KMSKS' region motif. K585 provides a ligand contact to ATP. Residues 689–711 (AHSPAQHQAGQDGQDAPRTPQPR) are disordered. The segment covering 693–704 (AQHQAGQDGQDA) has biased composition (low complexity). Positions 925–988 (LIDVDAERAR…TQLNGLRERR (64 aa)) form a coiled coil.

It belongs to the class-I aminoacyl-tRNA synthetase family. ValS type 1 subfamily. As to quaternary structure, monomer.

The protein resides in the cytoplasm. It catalyses the reaction tRNA(Val) + L-valine + ATP = L-valyl-tRNA(Val) + AMP + diphosphate. Its function is as follows. Catalyzes the attachment of valine to tRNA(Val). As ValRS can inadvertently accommodate and process structurally similar amino acids such as threonine, to avoid such errors, it has a 'posttransfer' editing activity that hydrolyzes mischarged Thr-tRNA(Val) in a tRNA-dependent manner. This is Valine--tRNA ligase from Xylella fastidiosa (strain M12).